A 206-amino-acid polypeptide reads, in one-letter code: Holliday junction branch migration complex subunit RuvA (206 aa).

Residues 1-64 are domain I; sequence MIGKLKGVLD…EDMIRLYGFR (64 aa). The tract at residues 65 to 144 is domain II; that stretch reads TVLEREWFRL…AFAGEAAGAI (80 aa). Residues 145–154 form a flexible linker region; the sequence is GLKQDLGEGV. Positions 154 to 206 are domain III; sequence VAPAPVSDAVSALANLGYSRDIAANAVAAALKSAGEGADTGTLIRLGLKELAR.

It belongs to the RuvA family. As to quaternary structure, homotetramer. Forms an RuvA(8)-RuvB(12)-Holliday junction (HJ) complex. HJ DNA is sandwiched between 2 RuvA tetramers; dsDNA enters through RuvA and exits via RuvB. An RuvB hexamer assembles on each DNA strand where it exits the tetramer. Each RuvB hexamer is contacted by two RuvA subunits (via domain III) on 2 adjacent RuvB subunits; this complex drives branch migration. In the full resolvosome a probable DNA-RuvA(4)-RuvB(12)-RuvC(2) complex forms which resolves the HJ.

Its subcellular location is the cytoplasm. The RuvA-RuvB-RuvC complex processes Holliday junction (HJ) DNA during genetic recombination and DNA repair, while the RuvA-RuvB complex plays an important role in the rescue of blocked DNA replication forks via replication fork reversal (RFR). RuvA specifically binds to HJ cruciform DNA, conferring on it an open structure. The RuvB hexamer acts as an ATP-dependent pump, pulling dsDNA into and through the RuvAB complex. HJ branch migration allows RuvC to scan DNA until it finds its consensus sequence, where it cleaves and resolves the cruciform DNA. The polypeptide is Holliday junction branch migration complex subunit RuvA (Chelativorans sp. (strain BNC1)).